Consider the following 193-residue polypeptide: Phosphoheptose isomerase (193 aa).

The region spanning 37 to 193 (LADSFKAGGK…QLIEKEMVKA (157 aa)) is the SIS domain. Position 52–54 (52–54 (NGG)) interacts with substrate. Zn(2+) contacts are provided by histidine 61 and glutamate 65. Residues glutamate 65, 93–94 (ND), 119–121 (STS), serine 124, and glutamine 172 contribute to the substrate site. Zn(2+) contacts are provided by glutamine 172 and histidine 180.

Belongs to the SIS family. GmhA subfamily. In terms of assembly, homotetramer. Requires Zn(2+) as cofactor.

The protein localises to the cytoplasm. The catalysed reaction is 2 D-sedoheptulose 7-phosphate = D-glycero-alpha-D-manno-heptose 7-phosphate + D-glycero-beta-D-manno-heptose 7-phosphate. Its pathway is carbohydrate biosynthesis; D-glycero-D-manno-heptose 7-phosphate biosynthesis; D-glycero-alpha-D-manno-heptose 7-phosphate and D-glycero-beta-D-manno-heptose 7-phosphate from sedoheptulose 7-phosphate: step 1/1. In terms of biological role, catalyzes the isomerization of sedoheptulose 7-phosphate in D-glycero-D-manno-heptose 7-phosphate. This is Phosphoheptose isomerase from Serratia proteamaculans (strain 568).